We begin with the raw amino-acid sequence, 236 residues long: Phosphoribosylaminoimidazole-succinocarboxamide synthase (236 aa).

This sequence belongs to the SAICAR synthetase family.

The catalysed reaction is 5-amino-1-(5-phospho-D-ribosyl)imidazole-4-carboxylate + L-aspartate + ATP = (2S)-2-[5-amino-1-(5-phospho-beta-D-ribosyl)imidazole-4-carboxamido]succinate + ADP + phosphate + 2 H(+). The protein operates within purine metabolism; IMP biosynthesis via de novo pathway; 5-amino-1-(5-phospho-D-ribosyl)imidazole-4-carboxamide from 5-amino-1-(5-phospho-D-ribosyl)imidazole-4-carboxylate: step 1/2. The sequence is that of Phosphoribosylaminoimidazole-succinocarboxamide synthase (purC) from Rickettsia prowazekii (strain Madrid E).